Here is a 387-residue protein sequence, read N- to C-terminus: Na(+)/H(+)-K(+) antiporter GerN (387 aa).

The next 11 helical transmembrane spans lie at 29–49 (PSVL…LGWI), 54–74 (LLTQ…GLET), 87–107 (LAVA…SGLV), 114–134 (NAVF…VQTL), 149–169 (LGAA…AMSF), 175–195 (VNLT…ILIG), 219–239 (ALII…AGII), 263–283 (PIAY…NITF), 290–310 (IWFI…GCGF), 324–344 (IIGA…GTGL), and 347–367 (GLLA…TTMI).

This sequence belongs to the monovalent cation:proton antiporter 2 (CPA2) transporter (TC 2.A.37) family.

The protein localises to the membrane. Na(+)/H(+) antiporter that extrudes sodium in exchange for external protons. Can also use potassium as a coupling ion, without completely replacing H(+). This Na(+)/H(+)-K(+) antiport is much more rapid than Na(+)/H(+) antiport. Can also extrude lithium. Important for the inosine-dependent germination of spores. This chain is Na(+)/H(+)-K(+) antiporter GerN (gerN), found in Bacillus cereus.